A 338-amino-acid chain; its full sequence is Lipoate-protein ligase A (338 aa).

In terms of domain architecture, BPL/LPL catalytic spans 29–216 (PATQRVLFLW…AFFAHYGERI (188 aa)). ATP-binding positions include Arg-71, 76 to 79 (GAVF), and Lys-134. Lys-134 contributes to the (R)-lipoate binding site.

Belongs to the LplA family. Monomer.

It localises to the cytoplasm. It carries out the reaction L-lysyl-[lipoyl-carrier protein] + (R)-lipoate + ATP = N(6)-[(R)-lipoyl]-L-lysyl-[lipoyl-carrier protein] + AMP + diphosphate + H(+). It functions in the pathway protein modification; protein lipoylation via exogenous pathway; protein N(6)-(lipoyl)lysine from lipoate: step 1/2. It participates in protein modification; protein lipoylation via exogenous pathway; protein N(6)-(lipoyl)lysine from lipoate: step 2/2. Catalyzes both the ATP-dependent activation of exogenously supplied lipoate to lipoyl-AMP and the transfer of the activated lipoyl onto the lipoyl domains of lipoate-dependent enzymes. The polypeptide is Lipoate-protein ligase A (Salmonella paratyphi A (strain ATCC 9150 / SARB42)).